The following is a 311-amino-acid chain: Systemic RNA interference defective protein 2 (311 aa).

The first 20 residues, 1–20, serve as a signal peptide directing secretion; sequence MPRFVYFCFALIALLPISWT. Over 21 to 188 the chain is Extracellular; sequence MDGILITDVE…EETKTVVNKN (168 aa). The helical transmembrane segment at 189 to 209 threads the bilayer; sequence GGAVAVAVIEGIALIAILAFL. The Cytoplasmic segment spans residues 210–311; that stretch reads GYRTMVNHKL…NDPFATLESW (102 aa). Positions 287-301 are enriched in polar residues; that stretch reads NSSAAQPSTTSNGQF. Residues 287 to 311 form a disordered region; sequence NSSAAQPSTTSNGQFNDPFATLESW.

As to expression, expressed in the intestinal lumen. Also present, at lower levels, in the excretory duct cells.

It is found in the apical cell membrane. The protein localises to the cytoplasm. Its function is as follows. Plays a role in RNA-mediated gene silencing by mediating endocytic uptake of double-stranded RNA (dsRNA) ingested from the environment into intestinal cells from the intestinal lumen. Selective for dsRNAs of at least 50 bp. Required for avoidance behavior induced by small RNAs derived from pathogenic bacteria such as P.aeruginosa. This is Systemic RNA interference defective protein 2 from Caenorhabditis elegans.